The sequence spans 141 residues: Nucleoside diphosphate kinase (141 aa).

ATP contacts are provided by K9, F57, R85, T91, R102, and N112. Residue H115 is the Pros-phosphohistidine intermediate of the active site.

It belongs to the NDK family. In terms of assembly, homotetramer. Requires Mg(2+) as cofactor.

It is found in the cytoplasm. The catalysed reaction is a 2'-deoxyribonucleoside 5'-diphosphate + ATP = a 2'-deoxyribonucleoside 5'-triphosphate + ADP. The enzyme catalyses a ribonucleoside 5'-diphosphate + ATP = a ribonucleoside 5'-triphosphate + ADP. Major role in the synthesis of nucleoside triphosphates other than ATP. The ATP gamma phosphate is transferred to the NDP beta phosphate via a ping-pong mechanism, using a phosphorylated active-site intermediate. The sequence is that of Nucleoside diphosphate kinase from Chlamydia abortus (strain DSM 27085 / S26/3) (Chlamydophila abortus).